We begin with the raw amino-acid sequence, 399 residues long: Transcription factor UNE10 (399 aa).

2 disordered regions span residues 119–158 and 173–228; these read QSKP…GSQR and MGSH…RRDK. The span at 178-201 shows a compositional bias: basic and acidic residues; sequence NTIDDHDSVCHSRPQMEDEEEKKA. Residues 213 to 262 form the bHLH domain; it reads RAAAIHNQSERKRRDKINQRMKTLQKLVPNSSKTDKASMLDEVIEYLKQL.

As to quaternary structure, homodimer. Associates to PTAC12/HMR/PAP5 which acts as a transcriptional coactivator. Interacts with the Pfr form of phyB but barely with that of phyA. Binds to COP1. Post-translationally, ubiquitinated and subsequently targeted to protein degradation by COP1 in the dark, but not in far-red light. In terms of tissue distribution, mainly expressed in stems, leaves, seedlings, fruits and flowers, and, to a lower extent, in roots.

Its subcellular location is the nucleus. Its activity is regulated as follows. Stabilized by phyA but destabilized by phyB. Accumulates in the dark but not in far-red light upon MG132 treatment, a 26S proteasome inhibitor (at protein level). Functionally, transcription factor binding to G-box elements (5'-CACGTG-3') in target genes promoters, particularly in far-red light but barely in the dark. Required during the fertilization of ovules by pollen. Repressor of phytochrome A-mediated far-red light responses including seed germination, suppression of hypocotyl elongation, and randomization of hypocotyl growth orientation. Does not inhibit phyB-induced red light responses. This is Transcription factor UNE10 from Arabidopsis thaliana (Mouse-ear cress).